Consider the following 191-residue polypeptide: Ribosomal RNA large subunit methyltransferase E (191 aa).

S-adenosyl-L-methionine contacts are provided by Gly49, Trp51, Asp66, Asp82, and Asp105. Lys145 acts as the Proton acceptor in catalysis.

Belongs to the class I-like SAM-binding methyltransferase superfamily. RNA methyltransferase RlmE family.

The protein resides in the cytoplasm. The enzyme catalyses uridine(2552) in 23S rRNA + S-adenosyl-L-methionine = 2'-O-methyluridine(2552) in 23S rRNA + S-adenosyl-L-homocysteine + H(+). Its function is as follows. Specifically methylates the uridine in position 2552 of 23S rRNA at the 2'-O position of the ribose in the fully assembled 50S ribosomal subunit. This chain is Ribosomal RNA large subunit methyltransferase E, found in Archaeoglobus fulgidus (strain ATCC 49558 / DSM 4304 / JCM 9628 / NBRC 100126 / VC-16).